Reading from the N-terminus, the 117-residue chain is Photosystem II reaction center Psb28 protein (117 aa).

It belongs to the Psb28 family. In terms of assembly, part of the photosystem II complex.

It is found in the cellular thylakoid membrane. In Prochlorococcus marinus (strain MIT 9301), this protein is Photosystem II reaction center Psb28 protein.